The primary structure comprises 78 residues: Large ribosomal subunit protein bL28 (78 aa).

Residues 1 to 20 (MSRVCQVTGKRPVTGNNRSH) are disordered.

It belongs to the bacterial ribosomal protein bL28 family.

This is Large ribosomal subunit protein bL28 from Vibrio atlanticus (strain LGP32) (Vibrio splendidus (strain Mel32)).